A 324-amino-acid polypeptide reads, in one-letter code: Antihemorrhagic factor jMSF (324 aa).

Positions 1-19 (MHFLVALVLLGQIIGSTLS) are cleaved as a signal peptide. Cystatin fetuin-A-type domains are found at residues 22–130 (VRGD…VKCH) and 141–254 (RNCP…SDCV). Residues 23–25 (RGD) carry the Cell attachment site motif. Disulfide bonds link cysteine 28–cysteine 315, cysteine 85–cysteine 96, cysteine 110–cysteine 129, cysteine 143–cysteine 146, cysteine 205–cysteine 217, cysteine 230–cysteine 253, and cysteine 287–cysteine 291. The N-linked (GlcNAc...) asparagine glycan is linked to asparagine 204. Asparagine 282 is a glycosylation site (N-linked (GlcNAc...) asparagine).

Homodimer. As to expression, expressed by the liver.

It localises to the secreted. Suppress hemorrhage induced by metalloproteinases from the same venom (brevilysin-H3, -H4, -H6) and from habu venom (weak inhibition of the metalloproteinases HR2A). The non-hemorrhagic brevilysin-H2 is strongly inhibited by jMSF, whereas the brevilysin-L6 is not inhibited. Does not inhibit serine and cysteine proteases such as trypsin, chymotrypsin, thermolysin, and papain. The inhibition may occur by formation of a non-covalent complex between this protein and the proteinases at their metalloproteinase domains. This Gloydius blomhoffii (Mamushi) protein is Antihemorrhagic factor jMSF.